Consider the following 240-residue polypeptide: Uridylate kinase (240 aa).

12 to 15 lines the ATP pocket; it reads KLSG. Residues 20-25 are involved in allosteric activation by GTP; that stretch reads GKQGFG. Gly-54 contacts UMP. Positions 55 and 59 each coordinate ATP. UMP contacts are provided by residues Asp-74 and 135–142; that span reads TGNPYFST. Asn-163, Tyr-169, and Asp-172 together coordinate ATP.

It belongs to the UMP kinase family. As to quaternary structure, homohexamer.

Its subcellular location is the cytoplasm. The catalysed reaction is UMP + ATP = UDP + ADP. It participates in pyrimidine metabolism; CTP biosynthesis via de novo pathway; UDP from UMP (UMPK route): step 1/1. Allosterically activated by GTP. Inhibited by UTP. In terms of biological role, catalyzes the reversible phosphorylation of UMP to UDP. This Geobacillus thermodenitrificans (strain NG80-2) protein is Uridylate kinase.